The chain runs to 346 residues: Ion-translocating oxidoreductase complex subunit D (346 aa).

4 helical membrane-spanning segments follow: residues isoleucine 20 to glycine 40, glycine 42 to leucine 62, leucine 69 to proline 91, and proline 120 to threonine 140. Threonine 187 carries the post-translational modification FMN phosphoryl threonine. 5 helical membrane passes run alanine 212–tryptophan 232, leucine 242–valine 262, alanine 264–threonine 284, alanine 290–isoleucine 310, and glycine 314–isoleucine 334.

It belongs to the NqrB/RnfD family. The complex is composed of six subunits: RnfA, RnfB, RnfC, RnfD, RnfE and RnfG. The cofactor is FMN.

Its subcellular location is the cell inner membrane. Functionally, part of a membrane-bound complex that couples electron transfer with translocation of ions across the membrane. This is Ion-translocating oxidoreductase complex subunit D from Sodalis glossinidius (strain morsitans).